A 633-amino-acid polypeptide reads, in one-letter code: MSELNYEELGLKVGLEIHQQLNTPHKLFCNCSTNLEEEYKLTLERYLRPALSELGEVDVAALFEWKKGKKYVYRIPITTSCLVEADEEPPHAINEEALKIALAIAMALNSNIVDEIYVMRKIVIDGSNTTGFQRTAIIALGGMLKDEEVSIQSIAVEEDAARKIDEGTDQVTYSLDRLGIPLIEISTGPDIRSPEQAERVALKIGQLLRMTGKVKRGIGTIRQDLNISIKGGTKIEIKGVQKLELIPDIVRYEAIRQFNLLKIKEELYRRGLTKELVLSNFVVKDVTELFKNTNSKIIKNGIEKGGLVYGIRAYKLKGVLGWELIPKKRRFGTEIADYVRALAGLGGLFHSDELPNYGITEEEINKVREALNATTEDALILIVGERERLDKAVEVIKDRILLAFDGIPKETRGALDDGTTKFLRPQPGSARMYPETDIPPRRIDEKLLEDAKKLVPESPESKMKRYIVLGLSEELAKEIIRDPRLDLFEELVNKYSPRVPPVVIASTITNTLKYVKSKGGDISKINEEDIEELIKSIYESRISKDSISEILVEYTTSKNVELKDIIRKYEVLPIEELEKIIDDIINSNLDEIRKRKDKAVNLIMSKVMSKVKGRADGKIVLELIRSRLKNVIE.

The disordered stretch occupies residues 415–437 (LDDGTTKFLRPQPGSARMYPETD).

The protein belongs to the GatB/GatE family. GatE subfamily. Heterodimer of GatD and GatE.

The enzyme catalyses L-glutamyl-tRNA(Gln) + L-glutamine + ATP + H2O = L-glutaminyl-tRNA(Gln) + L-glutamate + ADP + phosphate + H(+). Functionally, allows the formation of correctly charged Gln-tRNA(Gln) through the transamidation of misacylated Glu-tRNA(Gln) in organisms which lack glutaminyl-tRNA synthetase. The reaction takes place in the presence of glutamine and ATP through an activated gamma-phospho-Glu-tRNA(Gln). The GatDE system is specific for glutamate and does not act on aspartate. This chain is Glutamyl-tRNA(Gln) amidotransferase subunit E, found in Saccharolobus solfataricus (strain ATCC 35092 / DSM 1617 / JCM 11322 / P2) (Sulfolobus solfataricus).